The primary structure comprises 429 residues: Enolase (429 aa).

Residue Gln-164 coordinates (2R)-2-phosphoglycerate. The active-site Proton donor is the Glu-206. The Mg(2+) site is built by Asp-243, Glu-286, and Asp-313. Residues Lys-338, Arg-367, Ser-368, and Lys-389 each contribute to the (2R)-2-phosphoglycerate site. The Proton acceptor role is filled by Lys-338.

It belongs to the enolase family. Mg(2+) serves as cofactor.

The protein resides in the cytoplasm. Its subcellular location is the secreted. It is found in the cell surface. The enzyme catalyses (2R)-2-phosphoglycerate = phosphoenolpyruvate + H2O. The protein operates within carbohydrate degradation; glycolysis; pyruvate from D-glyceraldehyde 3-phosphate: step 4/5. In terms of biological role, catalyzes the reversible conversion of 2-phosphoglycerate (2-PG) into phosphoenolpyruvate (PEP). It is essential for the degradation of carbohydrates via glycolysis. The chain is Enolase from Thermosipho melanesiensis (strain DSM 12029 / CIP 104789 / BI429).